A 754-amino-acid chain; its full sequence is 5-methyltetrahydropteroyltriglutamate--homocysteine methyltransferase (754 aa).

Residues 17–20 and Lys117 contribute to the 5-methyltetrahydropteroyltri-L-glutamate site; that span reads RELK. Residues 431–433 and Glu484 contribute to the L-homocysteine site; that span reads IGS. L-methionine-binding positions include 431–433 and Glu484; that span reads IGS. 5-methyltetrahydropteroyltri-L-glutamate contacts are provided by residues 515–516 and Trp561; that span reads RC. Asp599 contributes to the L-homocysteine binding site. Asp599 contributes to the L-methionine binding site. A 5-methyltetrahydropteroyltri-L-glutamate-binding site is contributed by Glu605. His641, Cys643, and Glu665 together coordinate Zn(2+). His694 acts as the Proton donor in catalysis. Position 726 (Cys726) interacts with Zn(2+).

Belongs to the vitamin-B12 independent methionine synthase family. Zn(2+) is required as a cofactor.

It catalyses the reaction 5-methyltetrahydropteroyltri-L-glutamate + L-homocysteine = tetrahydropteroyltri-L-glutamate + L-methionine. Its pathway is amino-acid biosynthesis; L-methionine biosynthesis via de novo pathway; L-methionine from L-homocysteine (MetE route): step 1/1. Its function is as follows. Catalyzes the transfer of a methyl group from 5-methyltetrahydrofolate to homocysteine resulting in methionine formation. This is 5-methyltetrahydropteroyltriglutamate--homocysteine methyltransferase from Salmonella arizonae (strain ATCC BAA-731 / CDC346-86 / RSK2980).